The following is a 389-amino-acid chain: Flagellar P-ring protein (389 aa).

The N-terminal stretch at 1 to 33 (MRPLVAARRRAAACCALAACMLALAFAPAAARA) is a signal peptide.

This sequence belongs to the FlgI family. In terms of assembly, the basal body constitutes a major portion of the flagellar organelle and consists of four rings (L,P,S, and M) mounted on a central rod.

It is found in the periplasm. Its subcellular location is the bacterial flagellum basal body. Functionally, assembles around the rod to form the L-ring and probably protects the motor/basal body from shearing forces during rotation. This chain is Flagellar P-ring protein, found in Burkholderia pseudomallei (strain K96243).